Here is a 166-residue protein sequence, read N- to C-terminus: Transmembrane protein 278 (166 aa).

The span at 1-15 shows a compositional bias: acidic residues; that stretch reads MSDQERETEEDEGGD. The tract at residues 1–28 is disordered; the sequence is MSDQERETEEDEGGDPSDTAPMLPQRLP. 3 consecutive transmembrane segments (helical) span residues 39–59, 65–85, and 111–131; these read GWAS…WALA, LLLP…VVYL, and AAVI…ASAA.

It belongs to the TMEM88 family.

Its subcellular location is the membrane. This is Transmembrane protein 278 (TMEM278) from Bos taurus (Bovine).